Consider the following 155-residue polypeptide: 6,7-dimethyl-8-ribityllumazine synthase (155 aa).

Residues Phe-23, 57 to 59, and 81 to 83 each bind 5-amino-6-(D-ribitylamino)uracil; these read AFE and AVI. 86 to 87 serves as a coordination point for (2S)-2-hydroxy-3-oxobutyl phosphate; the sequence is ST. His-89 acts as the Proton donor in catalysis. Phe-114 contributes to the 5-amino-6-(D-ribitylamino)uracil binding site. Residue Arg-128 participates in (2S)-2-hydroxy-3-oxobutyl phosphate binding.

This sequence belongs to the DMRL synthase family.

The catalysed reaction is (2S)-2-hydroxy-3-oxobutyl phosphate + 5-amino-6-(D-ribitylamino)uracil = 6,7-dimethyl-8-(1-D-ribityl)lumazine + phosphate + 2 H2O + H(+). It functions in the pathway cofactor biosynthesis; riboflavin biosynthesis; riboflavin from 2-hydroxy-3-oxobutyl phosphate and 5-amino-6-(D-ribitylamino)uracil: step 1/2. Catalyzes the formation of 6,7-dimethyl-8-ribityllumazine by condensation of 5-amino-6-(D-ribitylamino)uracil with 3,4-dihydroxy-2-butanone 4-phosphate. This is the penultimate step in the biosynthesis of riboflavin. In Geobacter sulfurreducens (strain ATCC 51573 / DSM 12127 / PCA), this protein is 6,7-dimethyl-8-ribityllumazine synthase.